The sequence spans 569 residues: MGSTLGCHRSIPRDPSDLSHNRKFSAACNFSNILVNQERLNINTATEEELMTLPGVTRAVARSIVEYREYIGGFKKVEDLALVSGVGATKLEQVKFEICVSSKGNSAQHSPSSLRRDLLAEQQPHHLTTTVPLTPRVNINTATLAQLMSVRGLSEKMALSIVDYRREHGPFRSVEDLVRMDGINAAFLDRIRHQVFAERSRPPSTHTNGGLTFTAKPHPSPTSLSLQSEDLDLPPGGPTQIISMRPSVEAFGGMRDGRPVFRLATWNLQGCSVEKANNPGVREVVCMTLLENSIKLLAVQELLDKEALEKFCTELNQPILPNIRKWKGSRGCWRSIVAEKPSNQLQKGPCYSGFLWDTAANVELRDIPGRESSPSNGHAKAVGPSPFLARFKVGSNDLTLVNLQLTALALPGAENSSKNHSDGHRLLNFALTLQETLKGEKDVVILGDFGQGPDSNDYDILRREKFHHLVPAHTFTNISTRNPQGSKSVDNIWISKSLKKVFTGHWAVVREGLTNPWIPDNWSWGGVASEHCPVLAELYMEKDWSKKEVPRNGNGVTLEPSEANIKHER.

Residue glycine 2 is the site of N-myristoyl glycine attachment. 2 positions are modified to phosphoserine: serine 16 and serine 25. A HhH domain is found at 38-67 (ERLNINTATEEELMTLPGVTRAVARSIVEY). Phosphoserine occurs at positions 106, 110, 160, and 173. The disordered stretch occupies residues 200–224 (SRPPSTHTNGGLTFTAKPHPSPTSL). A compositionally biased stretch (polar residues) spans 202 to 211 (PPSTHTNGGL). Threonine 265 is subject to Phosphothreonine. The segment at 549 to 569 (VPRNGNGVTLEPSEANIKHER) is disordered.

The sequence is that of Endonuclease/exonuclease/phosphatase family domain-containing protein 1 (Eepd1) from Mus musculus (Mouse).